The chain runs to 374 residues: MAKERRRAVLELLQRPGNARCADCGAPDPDWASYTLGVFICLSCSGIHRNIPQVSKVKSVRLDAWEEAQVEFMASHGNDAARARFESKVPSFYYRPTPSDCQLLREQWIRAKYERQEFIYPEKQEPYSAGYREGFLWKRGRDNGQFLSRKFVLTEREGALKYFNRNDAKEPKAVMKIEHLNATFQPAKIGHPHGLQVTYLKDNSTRNIFIYHEDGKEIVDWFNALRAARFHYLQVAFPGAGDADLVPKLSRNYLKEGYMEKTGPKQTEGFRKRWFTMDDRRLMYFKDPLDAFARGEVFIGSKESGYTVLHGFPPSTQGHHWPHGITIVTPDRKFLFACETESDQREWVAAFQKAVDRPMLPQEYAVEAHFKHKP.

The 120-residue stretch at 7–126 (RAVLELLQRP…EFIYPEKQEP (120 aa)) folds into the Arf-GAP domain. A C4-type zinc finger spans residues 21–44 (CADCGAPDPDWASYTLGVFICLSC). Residue Ser87 is modified to Phosphoserine; by PKC. 2 PH domains span residues 129–230 (AGYR…AARF) and 252–356 (NYLK…KAVD). N6-acetyllysine is present on Lys272. Thr276 carries the post-translational modification Phosphothreonine; by PKC.

Interacts with PRKCA, PRKCI and PRKCZ. Interacts with the N-terminal region of PRKD1. In terms of processing, phosphorylated by PRKCA, PRKCI, PRKCZ and PRKD1 in vitro. In terms of tissue distribution, expressed at highest levels in brain and at lower levels in peripheral blood leukocytes.

The protein resides in the nucleus. It is found in the cytoplasm. In terms of biological role, GTPase-activating protein for the ADP ribosylation factor family. Binds phosphatidylinositol 3,4,5-trisphosphate (PtdInsP3) and inositol 1,3,4,5-tetrakisphosphate (InsP4). Regulates the incorporation of CD63 and CD9 into multivesicular bodies. This Homo sapiens (Human) protein is Arf-GAP with dual PH domain-containing protein 1 (ADAP1).